A 152-amino-acid chain; its full sequence is uncharacterized protein (152 aa).

Residues 1-5 (MWFPQ) are Cytoplasmic-facing. The helical transmembrane segment at 6 to 26 (IIAGMAAGGAASAMTPGKVLF) threads the bilayer. Topologically, residues 27-38 (TNALGLGCSRSR) are extracellular. A helical membrane pass occupies residues 39–59 (GLFLEMFGTAVLCFTVLMTAV). Residues 60 to 65 (EKRETN) lie on the Cytoplasmic side of the membrane. A helical transmembrane segment spans residues 66–86 (FMAALPIGISLFMAHMALTGY). Residues 87–110 (TGTGVNPARSLGAAVAARYFPHYH) lie on the Extracellular side of the membrane. Positions 92 to 94 (NPA) match the NPA motif. A helical transmembrane segment spans residues 111-131 (WIYWISPLLGAFLAWSVWQLL). Topologically, residues 132–152 (QILDYTTYVNAEKAAGQKKED) are cytoplasmic.

It belongs to the MIP/aquaporin (TC 1.A.8) family.

It is found in the membrane. This is an uncharacterized protein from Saccharomyces cerevisiae (strain YJM789) (Baker's yeast).